We begin with the raw amino-acid sequence, 294 residues long: Small ribosomal subunit protein uS3 (294 aa).

The region spanning 39–107 (VREYLKTKLK…PVAVNIEEVR (69 aa)) is the KH type-2 domain. Residues 210 to 294 (RNDLPAVETP…AAPAADVKGE (85 aa)) form a disordered region. A compositionally biased stretch (basic and acidic residues) spans 219-238 (PRPDEERRPRGPRRDGRPGG). Composition is skewed to low complexity over residues 249-258 (RPAAGNSAPA) and 281-294 (VAAP…VKGE).

The protein belongs to the universal ribosomal protein uS3 family. Part of the 30S ribosomal subunit. Forms a tight complex with proteins S10 and S14.

Functionally, binds the lower part of the 30S subunit head. Binds mRNA in the 70S ribosome, positioning it for translation. This chain is Small ribosomal subunit protein uS3, found in Verminephrobacter eiseniae (strain EF01-2).